A 165-amino-acid polypeptide reads, in one-letter code: Peptidyl-prolyl cis-trans isomerase-like 1 (165 aa).

In terms of domain architecture, PPIase cyclophilin-type spans 3 to 157 (EREEVILDTS…IVQKILYALN (155 aa)).

The protein belongs to the cyclophilin-type PPIase family. PPIL1 subfamily.

The catalysed reaction is [protein]-peptidylproline (omega=180) = [protein]-peptidylproline (omega=0). Its function is as follows. PPIases accelerate the folding of proteins. It catalyzes the cis-trans isomerization of proline imidic peptide bonds in oligopeptides. This chain is Peptidyl-prolyl cis-trans isomerase-like 1 (cyp3), found in Rhizopus delemar (strain RA 99-880 / ATCC MYA-4621 / FGSC 9543 / NRRL 43880) (Mucormycosis agent).